Reading from the N-terminus, the 778-residue chain is Kin of IRRE-like protein 3 (778 aa).

Residues 1-21 (MKPFQLDLLFVCFFLFSQELG) form the signal peptide. Over 22–535 (LQKRGCCLVL…GLEAESVPMA (514 aa)) the chain is Extracellular. 5 consecutive Ig-like C2-type domains span residues 48–142 (YSFS…ARLT), 147–243 (PDDP…TSVT), 249–330 (PPLV…RTVD), 335–415 (PRMT…VTLT), and 419–515 (PPII…IRLK). Cys-69 and Cys-127 are joined by a disulfide. N-linked (GlcNAc...) asparagine glycosylation occurs at Asn-167. A disulfide bridge links Cys-170 with Cys-227. Asn-253 is a glycosylation site (N-linked (GlcNAc...) asparagine). Cys-271 and Cys-314 are joined by a disulfide. A glycan (N-linked (GlcNAc...) asparagine) is linked at Asn-324. 2 disulfides stabilise this stretch: Cys-356–Cys-398 and Cys-440–Cys-499. An N-linked (GlcNAc...) asparagine glycan is attached at Asn-498. The helical transmembrane segment at 536 to 556 (VIIGVAVGAGVAFLVLMATIV) threads the bilayer. Topologically, residues 557–778 (AFCCARSQRN…PLQRRMQTHV (222 aa)) are cytoplasmic. Residues 727–736 (CDSSVSSSGK) are compositionally biased toward polar residues. The interval 727 to 778 (CDSSVSSSGKQDGYVQFDKASKASASSSHHSQSSSQNSDPSRPLQRRMQTHV) is disordered. A compositionally biased stretch (low complexity) spans 748 to 762 (KASASSSHHSQSSSQ).

Belongs to the immunoglobulin superfamily. As to quaternary structure, homodimer; mediates homophilic interactions to promote cell adhesion. Interacts with NPHS1; forms heterodimers with NPHS1. Interacts with NPHS2/podocin (via the C-terminus). Interacts with CASK. Interacts (via extracellular region) with MAP1B. Interacts (via extracellular region) with MYO16. Interacts (via intracellular region) with ATP1B1. Interacts (via intracellular region) with SHMT2. Interacts (via intracellular region) with UFC1. Undergoes proteolysis by a metalloprotease and gives rise to a soluble form. In terms of tissue distribution, expressed in fetal and adult brain. Also expressed in kidney, specifically in podocytes of kidney glomeruli. Also expressed in skeletal muscle.

Its subcellular location is the cell membrane. The protein resides in the secreted. In terms of biological role, synaptic adhesion molecule required for the formation of target-specific synapses. Required for formation of target-specific synapses at hippocampal mossy fiber synapses. Required for formation of mossy fiber filopodia, the synaptic structures connecting dentate granule and GABA neurons. Probably acts as a homophilic adhesion molecule that promotes trans-cellular interactions and stabilize mossy fiber filipodia contact and subsequent synapse formation. Required for the coalescence of vomeronasal sensory neuron axons. May be involved in the hematopoietic supportive capacity of stroma cells; the secreted extracellular domain is directly responsible for supporting hematopoietic stem cells. In Homo sapiens (Human), this protein is Kin of IRRE-like protein 3.